The following is a 328-amino-acid chain: UPF0421 protein SSP0904 (328 aa).

4 helical membrane passes run 26–46 (LFCL…IVTI), 61–81 (LPAT…FGDQ), 84–104 (FAYA…NLHV), and 132–152 (LLTA…ILPP).

This sequence belongs to the UPF0421 family.

The protein resides in the cell membrane. This Staphylococcus saprophyticus subsp. saprophyticus (strain ATCC 15305 / DSM 20229 / NCIMB 8711 / NCTC 7292 / S-41) protein is UPF0421 protein SSP0904.